The primary structure comprises 214 residues: MNYPHPIIAREGWPFIAIAAVIALLIHAVGGFGFAWPFWLLLVFVVQFFRDPQRPIPAQPNAVLCPADGRIVAVETAHDPYANREALKISVFMNVFNVHSQRSPVDGAITKVEYFPGAFLNAAIDKASTENERNAVVIQTASGKTVTSVQIAGLIARRILCYVRAGEPLSRGQRYGFIRFGSRVDVYLPLGSRAKVSIGEKVYASSTILAELEQ.

Catalysis depends on Ser182, which acts as the Schiff-base intermediate with substrate; via pyruvic acid. Ser182 carries the post-translational modification Pyruvic acid (Ser); by autocatalysis.

It belongs to the phosphatidylserine decarboxylase family. PSD-A subfamily. In terms of assembly, heterodimer of a large membrane-associated beta subunit and a small pyruvoyl-containing alpha subunit. Pyruvate serves as cofactor. Is synthesized initially as an inactive proenzyme. Formation of the active enzyme involves a self-maturation process in which the active site pyruvoyl group is generated from an internal serine residue via an autocatalytic post-translational modification. Two non-identical subunits are generated from the proenzyme in this reaction, and the pyruvate is formed at the N-terminus of the alpha chain, which is derived from the carboxyl end of the proenzyme. The post-translation cleavage follows an unusual pathway, termed non-hydrolytic serinolysis, in which the side chain hydroxyl group of the serine supplies its oxygen atom to form the C-terminus of the beta chain, while the remainder of the serine residue undergoes an oxidative deamination to produce ammonia and the pyruvoyl prosthetic group on the alpha chain.

It is found in the cell membrane. The enzyme catalyses a 1,2-diacyl-sn-glycero-3-phospho-L-serine + H(+) = a 1,2-diacyl-sn-glycero-3-phosphoethanolamine + CO2. It functions in the pathway phospholipid metabolism; phosphatidylethanolamine biosynthesis; phosphatidylethanolamine from CDP-diacylglycerol: step 2/2. Its function is as follows. Catalyzes the formation of phosphatidylethanolamine (PtdEtn) from phosphatidylserine (PtdSer). This Burkholderia multivorans (strain ATCC 17616 / 249) protein is Phosphatidylserine decarboxylase proenzyme.